Consider the following 344-residue polypeptide: MKTLLKNRELSAFFAIVALFVVLVALNPAYFILQTLAMIFASSQILCLLALGATLVMLTRNIDVSVGSTVGLCAIAVGVALNYGYGLATAIAFALAIGALAGAFNGLLVVGLRIPAIVATLGTLGLYRGVMLLWTGGKWIEGLPDSLKSLSEPAFIGVSPLGWLVLALLLAGGWLLSRTAFGRDFYAVGDNLAAARQLGVAVNRTRMLAFTLNGMLAACAGIVFAAQIGFVPNQTGSGLEMKAIAACVLGGISLLGGTGTLLGAFLGAFFLTQIDTVLVLFRLPAWWNDFIAGLVLLGVLVLDGRLRQALARHQRALKYSRFQPGNKGSKQVARFPERKSKEVA.

9 consecutive transmembrane segments (helical) span residues 13–33 (FFAI…YFIL), 38–58 (MIFA…LVML), 69–89 (TVGL…GLAT), 90–110 (AIAF…LLVV), 114–134 (IPAI…MLLW), 155–175 (FIGV…GGWL), 212–232 (LNGM…GFVP), 251–271 (GISL…AFFL), and 283–303 (LPAW…LVLD). Residues 323-344 (QPGNKGSKQVARFPERKSKEVA) form a disordered region. The segment covering 335–344 (FPERKSKEVA) has biased composition (basic and acidic residues).

It belongs to the binding-protein-dependent transport system permease family. AraH/RbsC subfamily. In terms of assembly, the complex is composed of two ATP-binding proteins (LsrA), two transmembrane proteins (LsrC and LsrD) and a solute-binding protein (LsrB).

It is found in the cell inner membrane. Part of the ABC transporter complex LsrABCD involved in autoinducer 2 (AI-2) import. Probably responsible for the translocation of the substrate across the membrane. In Klebsiella pneumoniae subsp. pneumoniae (strain ATCC 700721 / MGH 78578), this protein is Autoinducer 2 import system permease protein LsrC (lsrC).